The following is a 90-amino-acid chain: Probable Fe(2+)-trafficking protein (90 aa).

The protein belongs to the Fe(2+)-trafficking protein family.

In terms of biological role, could be a mediator in iron transactions between iron acquisition and iron-requiring processes, such as synthesis and/or repair of Fe-S clusters in biosynthetic enzymes. The polypeptide is Probable Fe(2+)-trafficking protein (Bordetella avium (strain 197N)).